The primary structure comprises 320 residues: Lipoyl synthase (320 aa).

The [4Fe-4S] cluster site is built by cysteine 67, cysteine 72, cysteine 78, cysteine 93, cysteine 97, cysteine 100, and serine 307. Residues 79 to 296 (FNHGTATFMI…REKAAEMGFE (218 aa)) form the Radical SAM core domain.

Belongs to the radical SAM superfamily. Lipoyl synthase family. [4Fe-4S] cluster is required as a cofactor.

It is found in the cytoplasm. The enzyme catalyses [[Fe-S] cluster scaffold protein carrying a second [4Fe-4S](2+) cluster] + N(6)-octanoyl-L-lysyl-[protein] + 2 oxidized [2Fe-2S]-[ferredoxin] + 2 S-adenosyl-L-methionine + 4 H(+) = [[Fe-S] cluster scaffold protein] + N(6)-[(R)-dihydrolipoyl]-L-lysyl-[protein] + 4 Fe(3+) + 2 hydrogen sulfide + 2 5'-deoxyadenosine + 2 L-methionine + 2 reduced [2Fe-2S]-[ferredoxin]. It functions in the pathway protein modification; protein lipoylation via endogenous pathway; protein N(6)-(lipoyl)lysine from octanoyl-[acyl-carrier-protein]: step 2/2. In terms of biological role, catalyzes the radical-mediated insertion of two sulfur atoms into the C-6 and C-8 positions of the octanoyl moiety bound to the lipoyl domains of lipoate-dependent enzymes, thereby converting the octanoylated domains into lipoylated derivatives. The chain is Lipoyl synthase from Actinobacillus succinogenes (strain ATCC 55618 / DSM 22257 / CCUG 43843 / 130Z).